Consider the following 528-residue polypeptide: GTPase Der (528 aa).

2 stretches are compositionally biased toward acidic residues: residues 1-12 and 30-62; these read MDVEGAFADEEE and GYDD…PDFG. The interval 1 to 62 is disordered; the sequence is MDVEGAFADE…EDDFAAPDFG (62 aa). 2 consecutive EngA-type G domains span residues 90-253 and 263-436; these read CTVA…PEEP and RRVA…ENWD. GTP is bound by residues 96–103, 143–147, 205–208, 269–276, 316–320, and 381–384; these read GRPNVGKS, DTGGW, NKFD, GKPNVGKS, DTAGL, and NKWD. In terms of domain architecture, KH-like spans 437–519; sequence RRVSTGQLNN…PIRIAVRVRE (83 aa).

It belongs to the TRAFAC class TrmE-Era-EngA-EngB-Septin-like GTPase superfamily. EngA (Der) GTPase family. As to quaternary structure, associates with the 50S ribosomal subunit.

In terms of biological role, GTPase that plays an essential role in the late steps of ribosome biogenesis. This Corynebacterium efficiens (strain DSM 44549 / YS-314 / AJ 12310 / JCM 11189 / NBRC 100395) protein is GTPase Der.